The following is a 255-amino-acid chain: Proteasome subunit alpha 2 (255 aa).

Residues 229–255 (AGSSLEEMLPTPAATEDAPPANGDAPS) form a disordered region. Positions 238–249 (PTPAATEDAPPA) are enriched in low complexity.

It belongs to the peptidase T1A family. As to quaternary structure, the 20S proteasome core is composed of 14 alpha and 14 beta subunits that assemble into four stacked heptameric rings, resulting in a barrel-shaped structure. The two inner rings, each composed of seven catalytic beta subunits, are sandwiched by two outer rings, each composed of seven alpha subunits. All four combinations of alpha- and beta-subunits (beta2-alpha1, beta2-alpha2, beta1-alpha2 and beta1-alpha1) yield fully assembled and proteolytically active proteasomes. The catalytic chamber with the active sites is on the inside of the barrel. Has probably a gated structure, the ends of the cylinder being occluded by the N-termini of the alpha-subunits. Is likely capped by the proteasome-associated ATPase, ARC. In terms of processing, the N-terminus is blocked.

Its subcellular location is the cytoplasm. Its pathway is protein degradation; proteasomal Pup-dependent pathway. The formation of the proteasomal ATPase ARC-20S proteasome complex, likely via the docking of the C-termini of ARC into the intersubunit pockets in the alpha-rings, may trigger opening of the gate for substrate entry. Interconversion between the open-gate and close-gate conformations leads to a dynamic regulation of the 20S proteasome proteolysis activity. Component of the proteasome core, a large protease complex with broad specificity involved in protein degradation. The R.erythropolis proteasomes are able to cleave oligopeptides after Tyr, Phe and Leu, very poorly after Arg but not after Glu. Thus, displays chymotrypsin-like activity, low trypsin-like activity but no caspase-like activity. The chain is Proteasome subunit alpha 2 from Rhodococcus erythropolis (Arthrobacter picolinophilus).